A 314-amino-acid polypeptide reads, in one-letter code: Vacuolar membrane protein FOSTERSO_4058 (314 aa).

Positions 32–59 are disordered; the sequence is KPTSSVVSETSSKSLPSLTSSAFSTSSG. The chain crosses the membrane as a helical span at residues 93–113; that stretch reads VYIAVGAVIGAIFISILIWWL. A phosphoserine mark is found at serine 148, serine 254, and serine 274. The disordered stretch occupies residues 240–309; the sequence is EERKLNLNRP…PSMFLDDVLN (70 aa). Positions 254-269 are enriched in basic and acidic residues; sequence SPERKEKKINSMEGYH.

The protein belongs to the PRM5 family.

The protein localises to the vacuole membrane. The polypeptide is Vacuolar membrane protein FOSTERSO_4058 (Saccharomyces cerevisiae (strain FostersO) (Baker's yeast)).